Consider the following 463-residue polypeptide: Probable diacyglycerol O-acyltransferase tgs1 (463 aa).

Position 1 is an N-acetylmethionine (Met1). His137 serves as the catalytic Proton acceptor.

Belongs to the long-chain O-acyltransferase family.

It carries out the reaction an acyl-CoA + a 1,2-diacyl-sn-glycerol = a triacyl-sn-glycerol + CoA. It catalyses the reaction di-(9Z)-octadecenoylglycerol + (9Z)-octadecenoyl-CoA = 1,2,3-tri-(9Z-octadecenoyl)-glycerol + CoA. It participates in glycerolipid metabolism; triacylglycerol biosynthesis. Functionally, catalyzes the terminal and only committed step in triacylglycerol synthesis by using diacylglycerol and fatty acyl CoA as substrates. Required for storage lipid synthesis. Its function is as follows. Upon expression in E.coli functions as a triacylglycerol synthase, making triacylglycerol (TG) from diolein and long-chain fatty acyl-CoA. Prefers C(26:0)-CoA over C(18:1)-CoA. TG synthesis activity increases in M.tuberculosis upon oxygen depletion and NO treatment, with concomitant accumulation of TG in inclusion bodies. As disruption of the gene encoding this protein obviates TG synthesis this seems to be the major enzyme involved in production of TG. Has no wax synthase activity to produce wax esters. The protein is Probable diacyglycerol O-acyltransferase tgs1 (tgs1) of Mycobacterium tuberculosis (strain ATCC 25618 / H37Rv).